The chain runs to 235 residues: Ubiquinone biosynthesis O-methyltransferase (235 aa).

S-adenosyl-L-methionine is bound by residues Arg39, Gly59, Asp80, and Met124.

Belongs to the methyltransferase superfamily. UbiG/COQ3 family.

It carries out the reaction a 3-demethylubiquinol + S-adenosyl-L-methionine = a ubiquinol + S-adenosyl-L-homocysteine + H(+). It catalyses the reaction a 3-(all-trans-polyprenyl)benzene-1,2-diol + S-adenosyl-L-methionine = a 2-methoxy-6-(all-trans-polyprenyl)phenol + S-adenosyl-L-homocysteine + H(+). Its pathway is cofactor biosynthesis; ubiquinone biosynthesis. In terms of biological role, O-methyltransferase that catalyzes the 2 O-methylation steps in the ubiquinone biosynthetic pathway. This is Ubiquinone biosynthesis O-methyltransferase from Photobacterium profundum (strain SS9).